A 398-amino-acid chain; its full sequence is Bombesin receptor subtype-3 (398 aa).

Over 1–40 (MAQRQPHSPNQTLISITNDTESSSVVSNDNTNKGRSGDNS) the chain is Extracellular. Residues Asn10 and Asn18 are each glycosylated (N-linked (GlcNAc...) asparagine). The chain crosses the membrane as a helical span at residues 41-62 (PGIEALCAIYITYAVIISVGIL). Topologically, residues 63-81 (GNAILIKVFFKTKSMQTVP) are cytoplasmic. Residues 82-102 (NIFITSLAFGDLLLLLTCVPV) form a helical membrane-spanning segment. Topologically, residues 103–120 (DATHYLAEGWLFGRIGCK) are extracellular. A disulfide bond links Cys119 and Cys202. A helical transmembrane segment spans residues 121–142 (VLSFIRLTSVGVSVFTLTILSA). The Cytoplasmic portion of the chain corresponds to 143–162 (DRYKAVVKPLERQPSNAILK). A helical membrane pass occupies residues 163 to 183 (TCIKAGCVWIVSMIFALPEAI). Over 184-219 (FSNVYSFRDPNKNVTFESCTSYPVSKKLLQEIHSLL) the chain is Extracellular. A helical transmembrane segment spans residues 220–240 (CFLVFYIIPLSIISVYYSLIA). Over 241–271 (RTLYKSTLNIPTEEQGHARKQIESRKRIART) the chain is Cytoplasmic. The chain crosses the membrane as a helical span at residues 272–292 (VLVLVALFALCWLPNHLLYLY). Over 293-312 (HSFTSQTYVDPSAMHFIFTI) the chain is Extracellular. Residues 313-332 (FSRVLAFSNSCVNPFALYWL) traverse the membrane as a helical segment. Residues 333 to 398 (SKTFQKHFKA…CSVKQAEDRV (66 aa)) are Cytoplasmic-facing. Cys346 is lipidated: S-palmitoyl cysteine.

It belongs to the G-protein coupled receptor 1 family. As to quaternary structure, interacts with C6orf89.

The protein resides in the cell membrane. In terms of biological role, role in sperm cell division, maturation, or function. This receptor mediates its action by association with G proteins that activate a phosphatidylinositol-calcium second messenger system. The sequence is that of Bombesin receptor subtype-3 (BRS3) from Macaca mulatta (Rhesus macaque).